We begin with the raw amino-acid sequence, 105 residues long: SH3 domain-binding glutamic acid-rich-like protein 2 (105 aa).

Residues 61-67 carry the SH3-binding motif; sequence KGNPLPP.

It belongs to the SH3BGR family.

The protein resides in the nucleus. The sequence is that of SH3 domain-binding glutamic acid-rich-like protein 2 (sh3bgrl2) from Danio rerio (Zebrafish).